Consider the following 152-residue polypeptide: Succinate dehydrogenase [ubiquinone] cytochrome b small subunit B, mitochondrial (152 aa).

A mitochondrion-targeting transit peptide spans Met-1–Ser-21. The Mitochondrial matrix portion of the chain corresponds to Leu-22–Ser-56. Residues Met-57–Leu-78 traverse the membrane as a helical segment. Residues Tyr-79–Ala-83 lie on the Mitochondrial intermembrane side of the membrane. Residues Met-84–Val-104 form a helical membrane-spanning segment. His-95 contributes to the heme b binding site. At Thr-105–Lys-113 the chain is on the mitochondrial matrix side. Tyr-107 is a binding site for a ubiquinone. The chain crosses the membrane as a helical span at residues Ile-114–Phe-135. The Mitochondrial intermembrane segment spans residues Asn-136 to Leu-152.

This sequence belongs to the CybS family. As to quaternary structure, component of complex II composed of four subunits: the flavoprotein (FP) SDHA, iron-sulfur protein (IP) SDHB, and a cytochrome b560 composed of SDHC and SDHD.

The protein resides in the mitochondrion inner membrane. Its pathway is carbohydrate metabolism; tricarboxylic acid cycle. Membrane-anchoring subunit of succinate dehydrogenase (SDH) that is involved in complex II of the mitochondrial electron transport chain and is responsible for transferring electrons from succinate to ubiquinone (coenzyme Q). SDH also oxidizes malate to the non-canonical enol form of oxaloacetate, enol-oxaloacetate. Enol-oxaloacetate, which is a potent inhibitor of the succinate dehydrogenase activity, is further isomerized into keto-oxaloacetate. This chain is Succinate dehydrogenase [ubiquinone] cytochrome b small subunit B, mitochondrial (sdhd-b), found in Xenopus laevis (African clawed frog).